The following is a 262-amino-acid chain: Hydroxyethylthiazole kinase (262 aa).

Position 50 (Met-50) interacts with substrate. 2 residues coordinate ATP: Arg-125 and Thr-171. Gly-198 serves as a coordination point for substrate.

It belongs to the Thz kinase family. Mg(2+) is required as a cofactor.

The catalysed reaction is 5-(2-hydroxyethyl)-4-methylthiazole + ATP = 4-methyl-5-(2-phosphooxyethyl)-thiazole + ADP + H(+). It participates in cofactor biosynthesis; thiamine diphosphate biosynthesis; 4-methyl-5-(2-phosphoethyl)-thiazole from 5-(2-hydroxyethyl)-4-methylthiazole: step 1/1. Functionally, catalyzes the phosphorylation of the hydroxyl group of 4-methyl-5-beta-hydroxyethylthiazole (THZ). The protein is Hydroxyethylthiazole kinase of Shigella sonnei (strain Ss046).